The primary structure comprises 568 residues: Glucose-6-phosphate isomerase, cytosolic 1 (568 aa).

Residue Glu-360 is the Proton donor of the active site. Catalysis depends on residues His-391 and Lys-516.

The protein belongs to the GPI family. As to quaternary structure, homodimer.

Its subcellular location is the cytoplasm. The catalysed reaction is alpha-D-glucose 6-phosphate = beta-D-fructose 6-phosphate. It participates in carbohydrate degradation; glycolysis; D-glyceraldehyde 3-phosphate and glycerone phosphate from D-glucose: step 2/4. In Clarkia williamsonii, this protein is Glucose-6-phosphate isomerase, cytosolic 1 (PGIC1).